Reading from the N-terminus, the 311-residue chain is 4-hydroxy-tetrahydrodipicolinate synthase (311 aa).

A pyruvate-binding site is contributed by T51. Residue Y140 is the Proton donor/acceptor of the active site. Catalysis depends on K168, which acts as the Schiff-base intermediate with substrate. I209 provides a ligand contact to pyruvate.

The protein belongs to the DapA family. Homotetramer; dimer of dimers.

The protein localises to the cytoplasm. It carries out the reaction L-aspartate 4-semialdehyde + pyruvate = (2S,4S)-4-hydroxy-2,3,4,5-tetrahydrodipicolinate + H2O + H(+). It functions in the pathway amino-acid biosynthesis; L-lysine biosynthesis via DAP pathway; (S)-tetrahydrodipicolinate from L-aspartate: step 3/4. Its function is as follows. Catalyzes the condensation of (S)-aspartate-beta-semialdehyde [(S)-ASA] and pyruvate to 4-hydroxy-tetrahydrodipicolinate (HTPA). The polypeptide is 4-hydroxy-tetrahydrodipicolinate synthase (Streptococcus gordonii (strain Challis / ATCC 35105 / BCRC 15272 / CH1 / DL1 / V288)).